Here is a 261-residue protein sequence, read N- to C-terminus: Cytochrome c oxidase subunit 3 (261 aa).

Residues Met1–Pro15 are Mitochondrial matrix-facing. A helical membrane pass occupies residues Trp16 to Trp34. The Mitochondrial intermembrane portion of the chain corresponds to Phe35–Pro40. The chain crosses the membrane as a helical span at residues Ser41–Thr66. Over Phe67–Thr72 the chain is Mitochondrial matrix. The helical transmembrane segment at Pro73–Ser105 threads the bilayer. At Leu106–Glu128 the chain is on the mitochondrial intermembrane side. Residues Val129–Met152 form a helical membrane-spanning segment. Residues Glu153–Asn155 lie on the Mitochondrial matrix side of the membrane. Residues Arg156 to Glu183 traverse the membrane as a helical segment. Residues Thr184 to Asp190 lie on the Mitochondrial intermembrane side of the membrane. A helical transmembrane segment spans residues Gly191–Phe223. At Asn224–His232 the chain is on the mitochondrial matrix side. A helical membrane pass occupies residues Phe233–Ile256. The Mitochondrial intermembrane portion of the chain corresponds to Tyr257–Ser261.

It belongs to the cytochrome c oxidase subunit 3 family. In terms of assembly, component of the cytochrome c oxidase (complex IV, CIV), a multisubunit enzyme composed of 14 subunits. The complex is composed of a catalytic core of 3 subunits MT-CO1, MT-CO2 and MT-CO3, encoded in the mitochondrial DNA, and 11 supernumerary subunits COX4I, COX5A, COX5B, COX6A, COX6B, COX6C, COX7A, COX7B, COX7C, COX8 and NDUFA4, which are encoded in the nuclear genome. The complex exists as a monomer or a dimer and forms supercomplexes (SCs) in the inner mitochondrial membrane with NADH-ubiquinone oxidoreductase (complex I, CI) and ubiquinol-cytochrome c oxidoreductase (cytochrome b-c1 complex, complex III, CIII), resulting in different assemblies (supercomplex SCI(1)III(2)IV(1) and megacomplex MCI(2)III(2)IV(2)).

The protein localises to the mitochondrion inner membrane. It carries out the reaction 4 Fe(II)-[cytochrome c] + O2 + 8 H(+)(in) = 4 Fe(III)-[cytochrome c] + 2 H2O + 4 H(+)(out). Component of the cytochrome c oxidase, the last enzyme in the mitochondrial electron transport chain which drives oxidative phosphorylation. The respiratory chain contains 3 multisubunit complexes succinate dehydrogenase (complex II, CII), ubiquinol-cytochrome c oxidoreductase (cytochrome b-c1 complex, complex III, CIII) and cytochrome c oxidase (complex IV, CIV), that cooperate to transfer electrons derived from NADH and succinate to molecular oxygen, creating an electrochemical gradient over the inner membrane that drives transmembrane transport and the ATP synthase. Cytochrome c oxidase is the component of the respiratory chain that catalyzes the reduction of oxygen to water. Electrons originating from reduced cytochrome c in the intermembrane space (IMS) are transferred via the dinuclear copper A center (CU(A)) of subunit 2 and heme A of subunit 1 to the active site in subunit 1, a binuclear center (BNC) formed by heme A3 and copper B (CU(B)). The BNC reduces molecular oxygen to 2 water molecules using 4 electrons from cytochrome c in the IMS and 4 protons from the mitochondrial matrix. This Oryctolagus cuniculus (Rabbit) protein is Cytochrome c oxidase subunit 3 (MT-CO3).